A 170-amino-acid chain; its full sequence is Urease accessory protein UreE (170 aa).

Belongs to the UreE family.

It is found in the cytoplasm. Functionally, involved in urease metallocenter assembly. Binds nickel. Probably functions as a nickel donor during metallocenter assembly. The sequence is that of Urease accessory protein UreE from Helicobacter pylori (strain G27).